The sequence spans 137 residues: uncharacterized protein (137 aa).

The first 15 residues, 1 to 15, serve as a signal peptide directing secretion; sequence MKKLAIAGALLLLAG. Residue Cys-16 is the site of N-palmitoyl cysteine attachment. Residue Cys-16 is the site of S-diacylglycerol cysteine attachment.

It localises to the cell membrane. This is an uncharacterized protein from Escherichia coli (strain K12).